The primary structure comprises 426 residues: Serine--tRNA ligase (426 aa).

233 to 235 (TAE) provides a ligand contact to L-serine. 264–266 (RSE) serves as a coordination point for ATP. Glu-287 is an L-serine binding site. Residue 351-354 (EISS) participates in ATP binding. Ser-387 is a binding site for L-serine.

This sequence belongs to the class-II aminoacyl-tRNA synthetase family. Type-1 seryl-tRNA synthetase subfamily. As to quaternary structure, homodimer. The tRNA molecule binds across the dimer.

The protein resides in the cytoplasm. It catalyses the reaction tRNA(Ser) + L-serine + ATP = L-seryl-tRNA(Ser) + AMP + diphosphate + H(+). The enzyme catalyses tRNA(Sec) + L-serine + ATP = L-seryl-tRNA(Sec) + AMP + diphosphate + H(+). The protein operates within aminoacyl-tRNA biosynthesis; selenocysteinyl-tRNA(Sec) biosynthesis; L-seryl-tRNA(Sec) from L-serine and tRNA(Sec): step 1/1. Catalyzes the attachment of serine to tRNA(Ser). Is also able to aminoacylate tRNA(Sec) with serine, to form the misacylated tRNA L-seryl-tRNA(Sec), which will be further converted into selenocysteinyl-tRNA(Sec). The polypeptide is Serine--tRNA ligase (Clostridium botulinum (strain Hall / ATCC 3502 / NCTC 13319 / Type A)).